A 394-amino-acid chain; its full sequence is MAKEKFERVKPHVNVGTIGHVDHGKTTLTAAISSVLTKTYGGTKRDFAQIDNAPEERERGITINTSHIEYDTPSRHYAHVDCPGHADYVKNMITGAAQMDGAILVVASTDGPMPQTREHILLSRQVGVPFIIVFMNKCDMVDDEELLELVEMEVRELLSEYDFPGDDLPVIQGSALKALEGEPEWEAKILELAEALDTYIPEPERAIDGAFILPIEDVFSIAGRGTVVTGRVERGIIKVGEEVEIVGIKDTTKSTCTGVEMFRKLLDEGRAGENCGVLLRGIKREDVERGQVLAAPGSITPHTTFKSEIYVLSKEEGGRHTPFFKGYRPQFYFRTTDVTGTIELPEGVEMVMPGDNVAMTVTLICPIAMDEGLRFAIREGGRTVGAGVVAEIVA.

Residues 10–204 (KPHVNVGTIG…ALDTYIPEPE (195 aa)) form the tr-type G domain. Residues 19 to 26 (GHVDHGKT) form a G1 region. Position 19–26 (19–26 (GHVDHGKT)) interacts with GTP. Thr26 lines the Mg(2+) pocket. The segment at 60-64 (GITIN) is G2. A G3 region spans residues 81 to 84 (DCPG). GTP is bound by residues 81–85 (DCPGH) and 136–139 (NKCD). The tract at residues 136–139 (NKCD) is G4. Positions 174–176 (SAL) are G5.

Belongs to the TRAFAC class translation factor GTPase superfamily. Classic translation factor GTPase family. EF-Tu/EF-1A subfamily. Monomer.

The protein resides in the cytoplasm. It catalyses the reaction GTP + H2O = GDP + phosphate + H(+). Its function is as follows. GTP hydrolase that promotes the GTP-dependent binding of aminoacyl-tRNA to the A-site of ribosomes during protein biosynthesis. In Shewanella pealeana (strain ATCC 700345 / ANG-SQ1), this protein is Elongation factor Tu.